Here is a 178-residue protein sequence, read N- to C-terminus: Ribosome maturation factor RimP (178 aa).

It belongs to the RimP family.

The protein resides in the cytoplasm. Required for maturation of 30S ribosomal subunits. The sequence is that of Ribosome maturation factor RimP from Streptococcus pyogenes serotype M3 (strain ATCC BAA-595 / MGAS315).